The following is a 434-amino-acid chain: Histidinol dehydrogenase (434 aa).

NAD(+) contacts are provided by tyrosine 130, glutamine 191, and asparagine 214. 3 residues coordinate substrate: serine 237, glutamine 259, and histidine 262. Residues glutamine 259 and histidine 262 each contribute to the Zn(2+) site. Catalysis depends on proton acceptor residues glutamate 328 and histidine 329. Positions 329, 362, 416, and 421 each coordinate substrate. Aspartate 362 lines the Zn(2+) pocket. Histidine 421 serves as a coordination point for Zn(2+).

This sequence belongs to the histidinol dehydrogenase family. Requires Zn(2+) as cofactor.

It catalyses the reaction L-histidinol + 2 NAD(+) + H2O = L-histidine + 2 NADH + 3 H(+). Its pathway is amino-acid biosynthesis; L-histidine biosynthesis; L-histidine from 5-phospho-alpha-D-ribose 1-diphosphate: step 9/9. In terms of biological role, catalyzes the sequential NAD-dependent oxidations of L-histidinol to L-histidinaldehyde and then to L-histidine. This chain is Histidinol dehydrogenase, found in Rhodospirillum rubrum (strain ATCC 11170 / ATH 1.1.1 / DSM 467 / LMG 4362 / NCIMB 8255 / S1).